A 1203-amino-acid chain; its full sequence is DNA-directed RNA polymerase subunit beta (1203 aa).

The interval L1167 to D1203 is disordered. Residues A1190–D1203 are compositionally biased toward polar residues.

Belongs to the RNA polymerase beta chain family. The RNAP catalytic core consists of 2 alpha, 1 beta, 1 beta' and 1 omega subunit. When a sigma factor is associated with the core the holoenzyme is formed, which can initiate transcription.

The enzyme catalyses RNA(n) + a ribonucleoside 5'-triphosphate = RNA(n+1) + diphosphate. Its function is as follows. DNA-dependent RNA polymerase catalyzes the transcription of DNA into RNA using the four ribonucleoside triphosphates as substrates. In Levilactobacillus brevis (strain ATCC 367 / BCRC 12310 / CIP 105137 / JCM 1170 / LMG 11437 / NCIMB 947 / NCTC 947) (Lactobacillus brevis), this protein is DNA-directed RNA polymerase subunit beta.